The chain runs to 256 residues: Imidazole glycerol phosphate synthase subunit HisF (256 aa).

Active-site residues include Asp-11 and Asp-130.

Belongs to the HisA/HisF family. As to quaternary structure, heterodimer of HisH and HisF.

The protein resides in the cytoplasm. The catalysed reaction is 5-[(5-phospho-1-deoxy-D-ribulos-1-ylimino)methylamino]-1-(5-phospho-beta-D-ribosyl)imidazole-4-carboxamide + L-glutamine = D-erythro-1-(imidazol-4-yl)glycerol 3-phosphate + 5-amino-1-(5-phospho-beta-D-ribosyl)imidazole-4-carboxamide + L-glutamate + H(+). Its pathway is amino-acid biosynthesis; L-histidine biosynthesis; L-histidine from 5-phospho-alpha-D-ribose 1-diphosphate: step 5/9. Functionally, IGPS catalyzes the conversion of PRFAR and glutamine to IGP, AICAR and glutamate. The HisF subunit catalyzes the cyclization activity that produces IGP and AICAR from PRFAR using the ammonia provided by the HisH subunit. The chain is Imidazole glycerol phosphate synthase subunit HisF from Cupriavidus necator (strain ATCC 17699 / DSM 428 / KCTC 22496 / NCIMB 10442 / H16 / Stanier 337) (Ralstonia eutropha).